Consider the following 1627-residue polypeptide: Type III effector DspE (1627 aa).

2 stretches are compositionally biased toward polar residues: residues 22–44 (AKTS…SLIQ) and 59–74 (GNGS…STTL). Disordered regions lie at residues 22–102 (AKTS…GPIQ) and 436–464 (QTQA…TPGW). Short sequence motifs (wxxxE) lie at residues 464-468 (WNLSD), 514-520 (WEASSVE), and 660-667 (WQNAANHD).

The protein belongs to the AvrE family.

The protein localises to the secreted. The protein resides in the host cell. Its function is as follows. Major virulence factor that may function as a water- and solute-permeable channel dedicated to creating osmotic/water potential perturbation and a water- and nutrient-rich apoplast in which bacteria multiply within the infected plant tissues. Required for plant cell death in N.benthamiana leaves and leaf cell death in S.tuberosum. Essential for pathogenicity. Does not suppress callose formation. The protein is Type III effector DspE of Pectobacterium carotovorum (Erwinia carotovora).